A 412-amino-acid polypeptide reads, in one-letter code: Gamma-glutamyl phosphate reductase (412 aa).

Belongs to the gamma-glutamyl phosphate reductase family.

Its subcellular location is the cytoplasm. It carries out the reaction L-glutamate 5-semialdehyde + phosphate + NADP(+) = L-glutamyl 5-phosphate + NADPH + H(+). It functions in the pathway amino-acid biosynthesis; L-proline biosynthesis; L-glutamate 5-semialdehyde from L-glutamate: step 2/2. Its function is as follows. Catalyzes the NADPH-dependent reduction of L-glutamate 5-phosphate into L-glutamate 5-semialdehyde and phosphate. The product spontaneously undergoes cyclization to form 1-pyrroline-5-carboxylate. This chain is Gamma-glutamyl phosphate reductase, found in Bartonella henselae (strain ATCC 49882 / DSM 28221 / CCUG 30454 / Houston 1) (Rochalimaea henselae).